Here is a 302-residue protein sequence, read N- to C-terminus: Galactofuranosyltransferase GlfT1 (302 aa).

This sequence belongs to the glycosyltransferase 2 family.

Its subcellular location is the cell membrane. It localises to the secreted. It is found in the cell wall. It catalyses the reaction alpha-L-rhamnosyl-(1-&gt;3)-N-acetyl-alpha-D-glucosaminyl-diphospho-trans,octa-cis-decaprenol + 2 UDP-alpha-D-galactofuranose = beta-D-galactofuranosyl-(1-&gt;5)-beta-D-galactofuranosyl-(1-&gt;4)-alpha-L-rhamnosyl-(1-&gt;3)-N-acetyl-alpha-D-glucosaminyl-diphospho-trans,octa-cis-decaprenol + 2 UDP + 2 H(+). It participates in cell wall biogenesis; cell wall polysaccharide biosynthesis. In terms of biological role, involved in the biosynthesis of the arabinogalactan (AG) region of the mycolylarabinogalactan-peptidoglycan (mAGP) complex, an essential component of the mycobacterial cell wall. Catalyzes the transfer of the first two galactofuranosyl (Galf) units from UDP-galactofuranose (UDP-Galf) onto the rhamnosyl-GlcNAc-diphospho-decaprenol (Rha-GlcNAc-PP-C50) acceptor, yielding galactofuranosyl-galactofuranosyl-rhamnosyl-GlcNAc-diphospho-decaprenol (Galf-Galf-Rha-GlcNAc-PP-C50). Thus, GlfT1 is the initiator of galactan synthesis, while GlfT2 continues with the subsequent polymerization events. This chain is Galactofuranosyltransferase GlfT1, found in Mycolicibacterium smegmatis (strain ATCC 700084 / mc(2)155) (Mycobacterium smegmatis).